Consider the following 280-residue polypeptide: RNA polymerase II holoenzyme cyclin-like subunit (280 aa).

Positions 23–150 (ERRKGLEDIF…LIEELGTYLV (128 aa)) constitute a Cyclin N-terminal domain.

The protein belongs to the cyclin family. Cyclin C subfamily. As to quaternary structure, component of the SRB8-11 complex, a regulatory module of the Mediator complex.

The protein localises to the nucleus. Component of the SRB8-11 complex. The SRB8-11 complex is a regulatory module of the Mediator complex which is itself involved in regulation of basal and activated RNA polymerase II-dependent transcription. The SRB8-11 complex may be involved in the transcriptional repression of a subset of genes regulated by Mediator. It may inhibit the association of the Mediator complex with RNA polymerase II to form the holoenzyme complex. The SRB8-11 complex phosphorylates the C-terminal domain (CTD) of the largest subunit of RNA polymerase II. In Yarrowia lipolytica (strain CLIB 122 / E 150) (Yeast), this protein is RNA polymerase II holoenzyme cyclin-like subunit (SSN8).